A 131-amino-acid chain; its full sequence is MAKTFKLKIVTPEKIFFEGEAEKINLETTEGKTEILANHSAFIAMLVPTNSKLITDKGEEKKFFLSSGILKVNTEEVVILCDAAEWPEEIDKKRAEEAKKRAEERLSKKDGVDIKRAEFALMRAIKRIEMV.

This sequence belongs to the ATPase epsilon chain family. In terms of assembly, F-type ATPases have 2 components, CF(1) - the catalytic core - and CF(0) - the membrane proton channel. CF(1) has five subunits: alpha(3), beta(3), gamma(1), delta(1), epsilon(1). CF(0) has three main subunits: a, b and c.

Its subcellular location is the cell membrane. Its function is as follows. Produces ATP from ADP in the presence of a proton gradient across the membrane. The polypeptide is ATP synthase epsilon chain (Clostridium novyi (strain NT)).